The sequence spans 336 residues: Syntaxin-31 (336 aa).

Residues 1–314 (MGSTFRDRTV…QHLTRISSNR (314 aa)) lie on the Cytoplasmic side of the membrane. Disordered regions lie at residues 23-53 (GAIP…KASR) and 152-218 (RSEN…SQLR). A compositionally biased stretch (basic and acidic residues) spans 154-163 (ENMKAHENRK). The segment covering 164–181 (QLFSTKNAVDSPPQNNAK) has biased composition (polar residues). Residues 190–202 (SSSSNPFGNLQQP) show a composition bias toward low complexity. Positions 244-306 (ENYSQSRAVA…EGARSALLQH (63 aa)) constitute a t-SNARE coiled-coil homology domain. A helical; Anchor for type IV membrane protein membrane pass occupies residues 315–335 (WLMMKIFAVIILFLIVFLFFV). Residue A336 is a topological domain, vesicular.

The protein belongs to the syntaxin family. In terms of assembly, part of the t-SNARE complex. Interacts with CDC48A, but not with VPS45.

The protein localises to the golgi apparatus. It is found in the cis-Golgi network membrane. It localises to the cytoplasm. Its subcellular location is the endosome. Its function is as follows. Vesicle trafficking protein that functions in the secretory pathway. In Arabidopsis thaliana (Mouse-ear cress), this protein is Syntaxin-31 (SYP31).